Consider the following 234-residue polypeptide: Protein XNDC1N (234 aa).

The polypeptide is Protein XNDC1N (Homo sapiens (Human)).